A 59-amino-acid polypeptide reads, in one-letter code: Photosystem II reaction center protein K (59 aa).

The propeptide occupies 1 to 22 (MLNIFSLIGLNSALYSSSCFFA). A helical membrane pass occupies residues 30–50 (FLSPIVDFMPVIPLLFFLLAF).

The protein belongs to the PsbK family. In terms of assembly, PSII is composed of 1 copy each of membrane proteins PsbA, PsbB, PsbC, PsbD, PsbE, PsbF, PsbH, PsbI, PsbJ, PsbK, PsbL, PsbM, PsbT, PsbX, PsbY, PsbZ, Psb30/Ycf12, at least 3 peripheral proteins of the oxygen-evolving complex and a large number of cofactors. It forms dimeric complexes.

The protein resides in the plastid. The protein localises to the chloroplast thylakoid membrane. One of the components of the core complex of photosystem II (PSII). PSII is a light-driven water:plastoquinone oxidoreductase that uses light energy to abstract electrons from H(2)O, generating O(2) and a proton gradient subsequently used for ATP formation. It consists of a core antenna complex that captures photons, and an electron transfer chain that converts photonic excitation into a charge separation. The polypeptide is Photosystem II reaction center protein K (Silene latifolia (White campion)).